Here is a 92-residue protein sequence, read N- to C-terminus: Small ribosomal subunit protein uS15c (92 aa).

This sequence belongs to the universal ribosomal protein uS15 family. Part of the 30S ribosomal subunit.

The protein localises to the plastid. It is found in the chloroplast. The polypeptide is Small ribosomal subunit protein uS15c (rps15) (Carica papaya (Papaya)).